Consider the following 132-residue polypeptide: mRNA interferase toxin YafO (132 aa).

As to quaternary structure, probably forms a complex with the antitoxin YafN which inhibits the mRNA interferase activity.

Toxic component of a type II toxin-antitoxin (TA) system. A translation-dependent mRNA interferase. Overexpression causes cessation of cell growth and inhibits cell proliferation via inhibition of translation; this blockage is overcome by subsequent expression of antitoxin YafN. Overexpression causes cleavage of a number of mRNAs in a ribosome-dependent fashion. YafO binding to the 50S ribosomal subunit in the translation complex induces mRNA cleavage 3' to the region protected by the ribosome; YafO alone is not able to digest mRNA. The polypeptide is mRNA interferase toxin YafO (yafO) (Escherichia coli (strain K12)).